A 192-amino-acid chain; its full sequence is Imidazoleglycerol-phosphate dehydratase (192 aa).

The protein belongs to the imidazoleglycerol-phosphate dehydratase family.

The protein localises to the cytoplasm. It catalyses the reaction D-erythro-1-(imidazol-4-yl)glycerol 3-phosphate = 3-(imidazol-4-yl)-2-oxopropyl phosphate + H2O. The protein operates within amino-acid biosynthesis; L-histidine biosynthesis; L-histidine from 5-phospho-alpha-D-ribose 1-diphosphate: step 6/9. This Staphylococcus epidermidis (strain ATCC 35984 / DSM 28319 / BCRC 17069 / CCUG 31568 / BM 3577 / RP62A) protein is Imidazoleglycerol-phosphate dehydratase.